A 216-amino-acid polypeptide reads, in one-letter code: Cytidylate kinase (216 aa).

Residue 7 to 15 (GPSGTGKST) participates in ATP binding.

The protein belongs to the cytidylate kinase family. Type 1 subfamily.

The protein localises to the cytoplasm. It carries out the reaction CMP + ATP = CDP + ADP. The catalysed reaction is dCMP + ATP = dCDP + ADP. This chain is Cytidylate kinase, found in Chlamydia pneumoniae (Chlamydophila pneumoniae).